The following is a 299-amino-acid chain: Regucalcin (299 aa).

Glu-18 provides a ligand contact to a divalent metal cation. 3 residues coordinate substrate: Arg-101, Asn-103, and Glu-121. Positions 154 and 204 each coordinate a divalent metal cation. The Proton donor/acceptor role is filled by Asp-204.

The protein belongs to the SMP-30/CGR1 family. Zn(2+) serves as cofactor. The cofactor is Mn(2+). Requires Ca(2+) as cofactor. Mg(2+) is required as a cofactor.

Its subcellular location is the cytoplasm. The catalysed reaction is D-glucono-1,5-lactone + H2O = D-gluconate + H(+). The protein operates within cofactor biosynthesis; L-ascorbate biosynthesis via UDP-alpha-D-glucuronate pathway; L-ascorbate from UDP-alpha-D-glucuronate: step 3/4. In terms of biological role, gluconolactonase with low activity towards other sugar lactones, including gulonolactone and galactonolactone. Catalyzes a key step in ascorbic acid (vitamin C) biosynthesis. Can also hydrolyze diisopropyl phosphorofluoridate and phenylacetate (in vitro). Calcium-binding protein. Modulates Ca(2+) signaling, and Ca(2+)-dependent cellular processes and enzyme activities. This is Regucalcin from Gallus gallus (Chicken).